The sequence spans 90 residues: U7-theraphotoxin-Hhn1a 4 (90 aa).

Residues 1-19 (MKTAIFTVVLALAVFAVLS) form the signal peptide. The propeptide occupies 20 to 50 (FGWEANEEALSEEFTELIHEKEAASETEARE). Disulfide bonds link C51/C65, C58/C70, and C64/C81.

It belongs to the neurotoxin 10 (Hwtx-1) family. 13 (Hntx-13) subfamily. As to expression, expressed by the venom gland.

It localises to the secreted. Ion channel inhibitor. In Cyriopagopus hainanus (Chinese bird spider), this protein is U7-theraphotoxin-Hhn1a 4.